We begin with the raw amino-acid sequence, 387 residues long: Patatin group A-2 (387 aa).

The first 23 residues, 1–23 (MATTKSFLILIVMILATTSSTFA), serve as a signal peptide directing secretion. In terms of domain architecture, PNPLA spans 32 to 230 (LSIDGGGIKG…TVADPALLSV (199 aa)). The GXGXXG motif lies at 36-41 (GGGIKG). The GXSXG signature appears at 75–79 (GTSTG). The Nucleophile role is filled by Ser-77. Residue Asn-115 is glycosylated (N-linked (GlcNAc...) asparagine). Asp-216 acts as the Proton acceptor in catalysis. The DGA/G motif lies at 216–218 (DGA). Residues 361–385 (ETYEEALKRFAKLLSDRKKLRANKA) adopt a coiled-coil conformation.

Belongs to the patatin family. Tuber and stolon.

The protein localises to the vacuole. Functionally, probable lipolytic acyl hydrolase (LAH), an activity which is thought to be involved in the response of tubers to pathogens. The sequence is that of Patatin group A-2 from Solanum tuberosum (Potato).